The primary structure comprises 227 residues: Phosphoglycolate phosphatase (227 aa).

Asp-8 serves as the catalytic Nucleophile. Mg(2+) contacts are provided by Asp-8 and Asp-10. Lys-150 is a substrate binding site. The Mg(2+) site is built by Asp-173 and Asp-177.

This sequence belongs to the archaeal SPP-like hydrolase family. Mg(2+) serves as cofactor.

It carries out the reaction 2-phosphoglycolate + H2O = glycolate + phosphate. Functionally, catalyzes the dephosphorylation of 2-phosphoglycolate. The protein is Phosphoglycolate phosphatase of Sulfolobus acidocaldarius (strain ATCC 33909 / DSM 639 / JCM 8929 / NBRC 15157 / NCIMB 11770).